Reading from the N-terminus, the 944-residue chain is MTTLASSYDPSSFESRLYAQWEAAGYFVPSGKGEPYTVLLPPPNVTGTLHMGHAFQQTLMDALVRYHRMRGYDTLWQVGTDHAGIATEMVVSRNLALEGKGQTRDSLGREGFIAKVWEWKAESGDTIERQMRRLGTSSDWSRSTFTMDPQPSAAVNEAFVRWYEQGLIYRGQRLVNWDPVLKTAISDLEVENVEEDGFLWSIRYPLADDVSYEHVEHDADGNETLRETRDYLVVATTRPETMLGDTAVMLHPEDARYLTLHNARIVLPLTGRHVPVITDDYVDRAFGTGVVKVTPAHDFNDYQVGVRHDLPLINLFTVTATINENAPERYRGLDRYDARKLVLSELEDLGVLVETKPHKLQVPRGDRTGQVIEPYLTDQWFVKMDALAKRGLELVESGQIKFVPPNWINTYRHWMENIQDWCISRQLWWGHRIPAWFDDAGKCYVGHDEAEVRAKHGLGAEIALHQDSDVLETWFSSQLWPFSTLGWPDAQAMAERGFGRYLPSSVLVTGFDIIFFWVARMIMATDSFTGQVPFRDVYITGLIRDAQGQKMSKSKGNVLDPLDIIDGISIEDLVAKRTSGLMKPKDAPKIEKATRKEFPDGIIAHGADALRFTIAALATHGRDIKFDLGRAEGYKNFCNKLWNATRFVLMNSEGARFTGVPQPRTEAEKWILARLDKVTAETHAHYANYRFDLLAQSLYEFAWNAFCDWFVELAKPALNHQDADAAASTRHTLLFVLESLLRLLHPLTPFVTEELWQQVAPRLGITTATISLQSFPQPGDVDTGSYASAEADVEWLKSMVSALRRVRSELNVPPSKQVRLLLQAGTADDRPRVARFASQLSFLLKLESIDWLDAGQDTPPSAAAIVGELTLLVPLEGLVDMDAERTRLDKEIRRVEGEIGKCNGKLGSATFVQNAPAAVVEQERARLNDWTTQLTGLREQRAKI.

The 'HIGH' region motif lies at 43–53 (PNVTGTLHMGH). The short motif at 550-554 (KMSKS) is the 'KMSKS' region element. Residue Lys-553 participates in ATP binding. The stretch at 878–942 (LVDMDAERTR…QLTGLREQRA (65 aa)) forms a coiled coil.

The protein belongs to the class-I aminoacyl-tRNA synthetase family. ValS type 1 subfamily. In terms of assembly, monomer.

Its subcellular location is the cytoplasm. The enzyme catalyses tRNA(Val) + L-valine + ATP = L-valyl-tRNA(Val) + AMP + diphosphate. Functionally, catalyzes the attachment of valine to tRNA(Val). As ValRS can inadvertently accommodate and process structurally similar amino acids such as threonine, to avoid such errors, it has a 'posttransfer' editing activity that hydrolyzes mischarged Thr-tRNA(Val) in a tRNA-dependent manner. This chain is Valine--tRNA ligase, found in Xanthomonas axonopodis pv. citri (strain 306).